A 209-amino-acid polypeptide reads, in one-letter code: Large ribosomal subunit protein uL3 (209 aa).

The tract at residues 128-163 (FGGGSRTHGQSDRLRAPGSVGGSSDPSRTFRGTRMA) is disordered.

It belongs to the universal ribosomal protein uL3 family. Part of the 50S ribosomal subunit. Forms a cluster with proteins L14 and L19.

Functionally, one of the primary rRNA binding proteins, it binds directly near the 3'-end of the 23S rRNA, where it nucleates assembly of the 50S subunit. The sequence is that of Large ribosomal subunit protein uL3 from Chlorobium phaeobacteroides (strain DSM 266 / SMG 266 / 2430).